A 474-amino-acid chain; its full sequence is Ribosomal RNA small subunit methyltransferase F (474 aa).

S-adenosyl-L-methionine contacts are provided by residues 119–125, Glu-143, Asp-170, and Asp-188; that span reads AAAPGSK. Cys-241 acts as the Nucleophile in catalysis.

It belongs to the class I-like SAM-binding methyltransferase superfamily. RsmB/NOP family.

It is found in the cytoplasm. The enzyme catalyses cytidine(1407) in 16S rRNA + S-adenosyl-L-methionine = 5-methylcytidine(1407) in 16S rRNA + S-adenosyl-L-homocysteine + H(+). Its function is as follows. Specifically methylates the cytosine at position 1407 (m5C1407) of 16S rRNA. This Shewanella oneidensis (strain ATCC 700550 / JCM 31522 / CIP 106686 / LMG 19005 / NCIMB 14063 / MR-1) protein is Ribosomal RNA small subunit methyltransferase F.